A 438-amino-acid polypeptide reads, in one-letter code: Asparagine--tRNA ligase (438 aa).

Belongs to the class-II aminoacyl-tRNA synthetase family. Homodimer.

The protein localises to the cytoplasm. It carries out the reaction tRNA(Asn) + L-asparagine + ATP = L-asparaginyl-tRNA(Asn) + AMP + diphosphate + H(+). The sequence is that of Asparagine--tRNA ligase from Thermus thermophilus (strain ATCC 27634 / DSM 579 / HB8).